A 158-amino-acid polypeptide reads, in one-letter code: NAD(P)H-quinone oxidoreductase subunit J, chloroplastic (158 aa).

Belongs to the complex I 30 kDa subunit family. In terms of assembly, NDH is composed of at least 16 different subunits, 5 of which are encoded in the nucleus.

The protein localises to the plastid. The protein resides in the chloroplast thylakoid membrane. The catalysed reaction is a plastoquinone + NADH + (n+1) H(+)(in) = a plastoquinol + NAD(+) + n H(+)(out). The enzyme catalyses a plastoquinone + NADPH + (n+1) H(+)(in) = a plastoquinol + NADP(+) + n H(+)(out). Its function is as follows. NDH shuttles electrons from NAD(P)H:plastoquinone, via FMN and iron-sulfur (Fe-S) centers, to quinones in the photosynthetic chain and possibly in a chloroplast respiratory chain. The immediate electron acceptor for the enzyme in this species is believed to be plastoquinone. Couples the redox reaction to proton translocation, and thus conserves the redox energy in a proton gradient. The polypeptide is NAD(P)H-quinone oxidoreductase subunit J, chloroplastic (Citrus sinensis (Sweet orange)).